A 750-amino-acid chain; its full sequence is Sulfhydryl oxidase 1 (750 aa).

Positions 1 to 32 (MGRCNRGSGPPSSLLLLLLLLLWLLAVPGASA) are cleaved as a signal peptide. The region spanning 39–159 (YSPSDPLTLL…RERLIDALES (121 aa)) is the Thioredoxin domain. Active-site nucleophile residues include Cys73 and Cys76. Cystine bridges form between Cys73–Cys76 and Cys104–Cys113. Residues Asn133 and Asn246 are each glycosylated (N-linked (GlcNAc...) asparagine). Cys396 and Cys408 form a disulfide bridge. The ERV/ALR sulfhydryl oxidase domain occupies 399–506 (SEPHFRGFPC…EDPQFPKVQW (108 aa)). The FAD site is built by Arg404, Trp411, and His415. Ser429 is modified (phosphoserine). An intrachain disulfide couples Cys452 to Cys455. FAD-binding positions include Asp454, His458, 481-488 (WSSHNRVN), Lys503, and Trp506. Cys512 and Cys515 are oxidised to a cystine. A glycan (N-linked (GlcNAc...) asparagine) is linked at Asn578. The segment at 578 to 645 (NSTVDLGKPE…REQPRGQWHL (68 aa)) is disordered. Residues 624–639 (PPEHMAELQTNEREQP) are compositionally biased toward basic and acidic residues. Residues 713–733 (ISLCVGLYSLSFMGLLAMYAY) traverse the membrane as a helical segment.

Belongs to the quiescin-sulfhydryl oxidase (QSOX) family. In terms of assembly, monomer. FAD is required as a cofactor. In terms of processing, N-glycosylated. O-glycosylated on Thr and Ser residues.

It is found in the golgi apparatus membrane. Its subcellular location is the secreted. It carries out the reaction 2 R'C(R)SH + O2 = R'C(R)S-S(R)CR' + H2O2. Its function is as follows. Catalyzes the oxidation of sulfhydryl groups in peptide and protein thiols to disulfides with the reduction of oxygen to hydrogen peroxide. Plays a role in disulfide bond formation in a variety of extracellular proteins. In fibroblasts, required for normal incorporation of laminin into the extracellular matrix, and thereby for normal cell-cell adhesion and cell migration. This chain is Sulfhydryl oxidase 1 (QSOX1), found in Pongo abelii (Sumatran orangutan).